The primary structure comprises 672 residues: DNA ligase (672 aa).

NAD(+) is bound by residues 32 to 36 (DEKYD), 82 to 83 (SL), and Glu113. Catalysis depends on Lys115, which acts as the N6-AMP-lysine intermediate. Residues Arg136, Glu173, Lys290, and Lys314 each coordinate NAD(+). 4 residues coordinate Zn(2+): Cys408, Cys411, Cys427, and Cys433. Positions 592 to 672 (DNNNTLFRKK…EFLNIINVYL (81 aa)) constitute a BRCT domain.

It belongs to the NAD-dependent DNA ligase family. LigA subfamily. Requires Mg(2+) as cofactor. The cofactor is Mn(2+).

The enzyme catalyses NAD(+) + (deoxyribonucleotide)n-3'-hydroxyl + 5'-phospho-(deoxyribonucleotide)m = (deoxyribonucleotide)n+m + AMP + beta-nicotinamide D-nucleotide.. Its function is as follows. DNA ligase that catalyzes the formation of phosphodiester linkages between 5'-phosphoryl and 3'-hydroxyl groups in double-stranded DNA using NAD as a coenzyme and as the energy source for the reaction. It is essential for DNA replication and repair of damaged DNA. In Buchnera aphidicola subsp. Baizongia pistaciae (strain Bp), this protein is DNA ligase.